The primary structure comprises 418 residues: Adenylosuccinate synthetase (418 aa).

Residues 12–18 (GDEGKGK) and 40–42 (GHT) each bind GTP. Asp13 acts as the Proton acceptor in catalysis. Mg(2+)-binding residues include Asp13 and Gly40. Residues 13-16 (DEGK), 38-41 (NAGH), Thr128, Arg142, Gln221, Thr236, and Arg299 contribute to the IMP site. His41 serves as the catalytic Proton donor. Substrate is bound at residue 295–301 (ATTGRNR). Residues Arg301, 327 to 329 (KAD), and 399 to 401 (SYG) each bind GTP.

This sequence belongs to the adenylosuccinate synthetase family. In terms of assembly, homodimer. It depends on Mg(2+) as a cofactor.

It is found in the cytoplasm. It carries out the reaction IMP + L-aspartate + GTP = N(6)-(1,2-dicarboxyethyl)-AMP + GDP + phosphate + 2 H(+). Its pathway is purine metabolism; AMP biosynthesis via de novo pathway; AMP from IMP: step 1/2. Its function is as follows. Plays an important role in the de novo pathway of purine nucleotide biosynthesis. Catalyzes the first committed step in the biosynthesis of AMP from IMP. This chain is Adenylosuccinate synthetase, found in Finegoldia magna (strain ATCC 29328 / DSM 20472 / WAL 2508) (Peptostreptococcus magnus).